Reading from the N-terminus, the 355-residue chain is Fructose-1,6-bisphosphatase class 1 (355 aa).

Positions 90, 109, 111, and 112 each coordinate Mg(2+). Residues 112 to 115, Asn204, and 256 to 258 contribute to the substrate site; these read DGSS and YLY. Glu276 lines the Mg(2+) pocket.

The protein belongs to the FBPase class 1 family. In terms of assembly, homotetramer. It depends on Mg(2+) as a cofactor.

The protein localises to the cytoplasm. It catalyses the reaction beta-D-fructose 1,6-bisphosphate + H2O = beta-D-fructose 6-phosphate + phosphate. Its pathway is carbohydrate biosynthesis; gluconeogenesis. The sequence is that of Fructose-1,6-bisphosphatase class 1 from Acidiphilium cryptum (strain JF-5).